The sequence spans 233 residues: 2,3,4,5-tetrahydropyridine-2,6-dicarboxylate N-acetyltransferase (233 aa).

It belongs to the transferase hexapeptide repeat family. DapH subfamily.

The enzyme catalyses (S)-2,3,4,5-tetrahydrodipicolinate + acetyl-CoA + H2O = L-2-acetamido-6-oxoheptanedioate + CoA. It functions in the pathway amino-acid biosynthesis; L-lysine biosynthesis via DAP pathway; LL-2,6-diaminopimelate from (S)-tetrahydrodipicolinate (acetylase route): step 1/3. In terms of biological role, catalyzes the transfer of an acetyl group from acetyl-CoA to tetrahydrodipicolinate. The sequence is that of 2,3,4,5-tetrahydropyridine-2,6-dicarboxylate N-acetyltransferase from Thermotoga petrophila (strain ATCC BAA-488 / DSM 13995 / JCM 10881 / RKU-1).